A 170-amino-acid chain; its full sequence is Acireductone dioxygenase (170 aa).

The Fe(2+) site is built by H99, H101, E105, and H144. Ni(2+) contacts are provided by H99, H101, E105, and H144.

The protein belongs to the acireductone dioxygenase (ARD) family. Monomer. Fe(2+) serves as cofactor. Ni(2+) is required as a cofactor.

The catalysed reaction is 1,2-dihydroxy-5-(methylsulfanyl)pent-1-en-3-one + O2 = 3-(methylsulfanyl)propanoate + CO + formate + 2 H(+). It carries out the reaction 1,2-dihydroxy-5-(methylsulfanyl)pent-1-en-3-one + O2 = 4-methylsulfanyl-2-oxobutanoate + formate + 2 H(+). The protein operates within amino-acid biosynthesis; L-methionine biosynthesis via salvage pathway; L-methionine from S-methyl-5-thio-alpha-D-ribose 1-phosphate: step 5/6. In terms of biological role, catalyzes 2 different reactions between oxygen and the acireductone 1,2-dihydroxy-3-keto-5-methylthiopentene (DHK-MTPene) depending upon the metal bound in the active site. Fe-containing acireductone dioxygenase (Fe-ARD) produces formate and 2-keto-4-methylthiobutyrate (KMTB), the alpha-ketoacid precursor of methionine in the methionine recycle pathway. Ni-containing acireductone dioxygenase (Ni-ARD) produces methylthiopropionate, carbon monoxide and formate, and does not lie on the methionine recycle pathway. This chain is Acireductone dioxygenase, found in Bacillus anthracis.